The sequence spans 418 residues: Voltage-gated ClC-type chloride channel ClcB (418 aa).

Helical transmembrane passes span 5–25 (LLIA…FRHA), 54–74 (LLTP…WQKF), 146–166 (LWIA…PLAG), 168–188 (LFIA…PVII), 222–242 (ALII…LTLM), 258–278 (WQLA…PAVW), 291–311 (APPL…AVLA), 316–336 (GAPG…GMLY), 352–372 (LLLG…APIM), and 380–400 (MTGE…ASVI).

This sequence belongs to the chloride channel (TC 2.A.49) family. ClcB subfamily.

It is found in the cell inner membrane. Its function is as follows. Probably acts as an electrical shunt for an outwardly-directed proton pump that is linked to amino acid decarboxylation, as part of the extreme acid resistance (XAR) response. This is Voltage-gated ClC-type chloride channel ClcB from Escherichia coli O17:K52:H18 (strain UMN026 / ExPEC).